The following is a 177-amino-acid chain: Adenylate kinase (177 aa).

Residue 13 to 18 coordinates ATP; that stretch reads GCGKGT. Positions 33-62 are NMP; the sequence is SSGDIIREEMKKSSKEATVIREMVNSGRLA. Residues Ser34, Arg39, 60-62, 85-88, and Gln92 contribute to the AMP site; these read RLA and GYPR. Residues 119–127 are LID; that stretch reads GRNEGRDDD. Arg120 provides a ligand contact to ATP. The AMP site is built by Arg124 and Arg135.

This sequence belongs to the adenylate kinase family. Monomer.

The protein resides in the cytoplasm. It carries out the reaction AMP + ATP = 2 ADP. Its function is as follows. Catalyzes the reversible transfer of the terminal phosphate group between ATP and AMP. Plays an important role in cellular energy homeostasis and in adenine nucleotide metabolism. The protein is Adenylate kinase of Encephalitozoon cuniculi (strain GB-M1) (Microsporidian parasite).